Consider the following 433-residue polypeptide: PBSX phage terminase large subunit (433 aa).

This sequence to B.subtilis YqaT and phage SPP1 terminase large subunit. As to quaternary structure, dimer of a small and a large subunit.

Functions as a terminase. The polypeptide is PBSX phage terminase large subunit (xtmB) (Bacillus subtilis (strain 168)).